The chain runs to 128 residues: Flagellar basal body rod protein FlgB (128 aa).

Belongs to the flagella basal body rod proteins family. In terms of assembly, the basal body constitutes a major portion of the flagellar organelle and consists of a number of rings mounted on a central rod. In Gram-negative bacteria, at least four rings, L, P, S and M are present, whereas Gram-positive bacteria lack the L and P rings. The rod consists of about 26 subunits of FlgG in the distal portion, and FlgB, FlgC and FlgF build up the proximal portion of the rod with about 6 subunits each. Rod assembly occurs by export via the flagellum-specific pathway of its constituent proteins and by their incorporation into the rod structure in the probable order of FlgB, FlgC, FlgF and FlgG. Another protein, FliE, also assembles onto the stable rod structure.

It is found in the bacterial flagellum basal body. Its function is as follows. Structural component of flagellum, the bacterial motility apparatus. Part of the rod structure of flagellar basal body. This chain is Flagellar basal body rod protein FlgB, found in Cereibacter sphaeroides (Rhodobacter sphaeroides).